The primary structure comprises 149 residues: Transcriptional repressor NrdR (149 aa).

A zinc finger lies at 3–34; it reads CPFCSATDTKVIDSRLVADGHQVRRRRECVQC. Positions 49–139 constitute an ATP-cone domain; the sequence is PRVVKQDGSR…VYRAFEDVSE (91 aa).

It belongs to the NrdR family. Zn(2+) serves as cofactor.

In terms of biological role, negatively regulates transcription of bacterial ribonucleotide reductase nrd genes and operons by binding to NrdR-boxes. The polypeptide is Transcriptional repressor NrdR (Shewanella piezotolerans (strain WP3 / JCM 13877)).